The following is a 212-amino-acid chain: Deoxyribose-phosphate aldolase (212 aa).

The active-site Proton donor/acceptor is Asp-89. Lys-151 serves as the catalytic Schiff-base intermediate with acetaldehyde. Lys-180 functions as the Proton donor/acceptor in the catalytic mechanism.

This sequence belongs to the DeoC/FbaB aldolase family. DeoC type 1 subfamily.

It is found in the cytoplasm. It carries out the reaction 2-deoxy-D-ribose 5-phosphate = D-glyceraldehyde 3-phosphate + acetaldehyde. The protein operates within carbohydrate degradation; 2-deoxy-D-ribose 1-phosphate degradation; D-glyceraldehyde 3-phosphate and acetaldehyde from 2-deoxy-alpha-D-ribose 1-phosphate: step 2/2. Functionally, catalyzes a reversible aldol reaction between acetaldehyde and D-glyceraldehyde 3-phosphate to generate 2-deoxy-D-ribose 5-phosphate. In Clostridium botulinum (strain Kyoto / Type A2), this protein is Deoxyribose-phosphate aldolase.